A 201-amino-acid polypeptide reads, in one-letter code: Imidazoleglycerol-phosphate dehydratase (201 aa).

This sequence belongs to the imidazoleglycerol-phosphate dehydratase family.

The protein localises to the cytoplasm. It carries out the reaction D-erythro-1-(imidazol-4-yl)glycerol 3-phosphate = 3-(imidazol-4-yl)-2-oxopropyl phosphate + H2O. It functions in the pathway amino-acid biosynthesis; L-histidine biosynthesis; L-histidine from 5-phospho-alpha-D-ribose 1-diphosphate: step 6/9. The sequence is that of Imidazoleglycerol-phosphate dehydratase from Prochlorococcus marinus (strain MIT 9515).